The following is a 37-amino-acid chain: Small ribosomal subunit protein eS32 (37 aa).

It belongs to the eukaryotic ribosomal protein eS32 family. Part of the small ribosomal subunit.

Its function is as follows. Interacts with N(4)-acetylcytidine (ac(4)C) 1459 of the small rRNA; the acetyl group of ac(4)C1459 briges the interaction with this protein. This is Small ribosomal subunit protein eS32 (rpl41e) from Thermococcus kodakarensis (strain ATCC BAA-918 / JCM 12380 / KOD1) (Pyrococcus kodakaraensis (strain KOD1)).